We begin with the raw amino-acid sequence, 352 residues long: N-acetyl-gamma-glutamyl-phosphate reductase (352 aa).

The active site involves Cys-155.

The protein belongs to the NAGSA dehydrogenase family. Type 1 subfamily.

The protein localises to the cytoplasm. It carries out the reaction N-acetyl-L-glutamate 5-semialdehyde + phosphate + NADP(+) = N-acetyl-L-glutamyl 5-phosphate + NADPH + H(+). Its pathway is amino-acid biosynthesis; L-arginine biosynthesis; N(2)-acetyl-L-ornithine from L-glutamate: step 3/4. Its function is as follows. Catalyzes the NADPH-dependent reduction of N-acetyl-5-glutamyl phosphate to yield N-acetyl-L-glutamate 5-semialdehyde. The polypeptide is N-acetyl-gamma-glutamyl-phosphate reductase (Crocosphaera subtropica (strain ATCC 51142 / BH68) (Cyanothece sp. (strain ATCC 51142))).